A 220-amino-acid polypeptide reads, in one-letter code: Probable septum site-determining protein MinC (220 aa).

The protein belongs to the MinC family. In terms of assembly, interacts with MinD and FtsZ.

Functionally, cell division inhibitor that blocks the formation of polar Z ring septums. Rapidly oscillates between the poles of the cell to destabilize FtsZ filaments that have formed before they mature into polar Z rings. Prevents FtsZ polymerization. This chain is Probable septum site-determining protein MinC, found in Photobacterium profundum (strain SS9).